A 103-amino-acid polypeptide reads, in one-letter code: Histone H4 (103 aa).

Residues 1 to 14 (MSGRGKGGKGLGKG) are compositionally biased toward gly residues. Residues 1–20 (MSGRGKGGKGLGKGGAKRHR) form a disordered region. K6 carries the N6-acetyl-N6-methyllysine; alternate modification. 3 positions are modified to N6-methyllysine; alternate: K6, K9, and K13. N6-acetyl-N6-methyllysine; alternate is present on K13. Residues 17–21 (KRHRK) mediate DNA binding. Residue K92 is modified to N6-glutaryllysine.

The protein belongs to the histone H4 family. As to quaternary structure, the nucleosome is a histone octamer containing two molecules each of H2A, H2B, H3 and H4 assembled in one H3-H4 heterotetramer and two H2A-H2B heterodimers. The octamer wraps approximately 147 bp of DNA. Post-translationally, glutarylation at Lys-92 (H4K91glu) destabilizes nucleosomes by promoting dissociation of the H2A-H2B dimers from nucleosomes.

Its subcellular location is the nucleus. It is found in the chromosome. Functionally, core component of nucleosome. Nucleosomes wrap and compact DNA into chromatin, limiting DNA accessibility to the cellular machineries which require DNA as a template. Histones thereby play a central role in transcription regulation, DNA repair, DNA replication and chromosomal stability. DNA accessibility is regulated via a complex set of post-translational modifications of histones, also called histone code, and nucleosome remodeling. The protein is Histone H4 (HHF1) of Mycosarcoma maydis (Corn smut fungus).